The primary structure comprises 58 residues: Large ribosomal subunit protein uL30 (58 aa).

Belongs to the universal ribosomal protein uL30 family. Part of the 50S ribosomal subunit.

This Porphyromonas gingivalis (strain ATCC 33277 / DSM 20709 / CIP 103683 / JCM 12257 / NCTC 11834 / 2561) protein is Large ribosomal subunit protein uL30.